Consider the following 372-residue polypeptide: N-methyl-L-tryptophan oxidase (372 aa).

Position 4 to 34 (4 to 34) interacts with FAD; the sequence is DLIIIGSGSVGAAAGYYATRAGLNVLMTDAH. S-8alpha-FAD cysteine is present on Cys-308.

The protein belongs to the MSOX/MTOX family. MTOX subfamily. As to quaternary structure, monomer. FAD serves as cofactor.

The enzyme catalyses N(alpha)-methyl-L-tryptophan + O2 + H2O = L-tryptophan + formaldehyde + H2O2. Catalyzes the oxidative demethylation of N-methyl-L-tryptophan. The chain is N-methyl-L-tryptophan oxidase from Shigella flexneri serotype 5b (strain 8401).